Consider the following 246-residue polypeptide: MQIDLNADLGEGCGNDEALLALISSANIACGWHAGDAATMLQTVKWALANKVSIGAHPSFPDRENFGRTEMQRDPEAVYADVLYQIGALDAMVRAQGGELAHVKPHGALYNMAVRDAKLCEAIVRAVRDYDSDLVFFGLANSQMIDIARAAGLRVKEEVFADRGYNPDGTLVKRGTPGALHEDEDVALNQTLSMVRDKQVRAIDGTWVPIRAETVCLHGDGAHALAFARRIRERLGAEGIAIRAGN.

It belongs to the LamB/PxpA family. In terms of assembly, forms a complex composed of PxpA, PxpB and PxpC.

It catalyses the reaction 5-oxo-L-proline + ATP + 2 H2O = L-glutamate + ADP + phosphate + H(+). Functionally, catalyzes the cleavage of 5-oxoproline to form L-glutamate coupled to the hydrolysis of ATP to ADP and inorganic phosphate. In Cupriavidus metallidurans (strain ATCC 43123 / DSM 2839 / NBRC 102507 / CH34) (Ralstonia metallidurans), this protein is 5-oxoprolinase subunit A.